Consider the following 108-residue polypeptide: Evasin P1229 (108 aa).

Residues 1–31 (MEVRTFAFLQIVVFVALGIQLFAAVTDAADA) form the signal peptide. Cystine bridges form between Cys41-Cys63, Cys45-Cys65, and Cys56-Cys76. Asn44 carries N-linked (GlcNAc...) asparagine glycosylation. Residues 88 to 108 (GDPNNSDLDAATPRHPDASSR) are disordered. Asn91 carries N-linked (GlcNAc...) asparagine glycosylation. Residues 99-108 (TPRHPDASSR) show a composition bias toward basic and acidic residues.

The protein localises to the secreted. Functionally, salivary chemokine-binding protein which binds to host chemokines CXCL1 and CXCL8. This Ixodes ricinus (Common tick) protein is Evasin P1229.